The sequence spans 760 residues: Xaa-Pro dipeptidyl-peptidase (760 aa).

Active-site charge relay system residues include S349, D469, and H499.

It belongs to the peptidase S15 family. As to quaternary structure, homodimer.

The protein localises to the cytoplasm. It catalyses the reaction Hydrolyzes Xaa-Pro-|- bonds to release unblocked, N-terminal dipeptides from substrates including Ala-Pro-|-p-nitroanilide and (sequentially) Tyr-Pro-|-Phe-Pro-|-Gly-Pro-|-Ile.. In terms of biological role, removes N-terminal dipeptides sequentially from polypeptides having unsubstituted N-termini provided that the penultimate residue is proline. The polypeptide is Xaa-Pro dipeptidyl-peptidase (Streptococcus pyogenes serotype M49 (strain NZ131)).